The sequence spans 568 residues: Small ribosomal subunit protein bS1 (568 aa).

S1 motif domains lie at 27–93, 111–177, 198–266, 283–353, 370–440, and 459–530; these read GYVA…LSRE, GERV…VSRR, GQVV…LGMK, GKKI…LGLK, GTEV…LGIK, and NAVV…LSIK.

It belongs to the bacterial ribosomal protein bS1 family.

Functionally, binds mRNA; thus facilitating recognition of the initiation point. It is needed to translate mRNA with a short Shine-Dalgarno (SD) purine-rich sequence. The sequence is that of Small ribosomal subunit protein bS1 (rpsA) from Rhizobium meliloti (strain 1021) (Ensifer meliloti).